Here is an 819-residue protein sequence, read N- to C-terminus: Ent-beyerene synthase KSL2, chloroplastic (819 aa).

A chloroplast-targeting transit peptide spans 1-58; it reads MLPCLFPAYGSVVACKPSAIDRSPFGLLSQPKQTNRTLIRRPKVTKAFMAIEAMRHCS. Residues 58 to 76 show a composition bias toward low complexity; the sequence is SSSSSSEEGGAAATTAARS. The disordered stretch occupies residues 58–77; the sequence is SSSSSSEEGGAAATTAARSA. Mg(2+) contacts are provided by Asp-567, Asp-571, Asn-711, Ser-715, and Glu-719. Residues 567 to 571 carry the DDXXD motif motif; it reads DDFFD.

The protein belongs to the terpene synthase family. Mg(2+) serves as cofactor. Expressed in roots. Highly expressed in stems, flowers and panicle.

Its subcellular location is the plastid. The protein localises to the chloroplast. The enzyme catalyses ent-copalyl diphosphate = ent-beyerene + diphosphate. It carries out the reaction ent-copalyl diphosphate = ent-kaur-16-ene + diphosphate. The protein operates within secondary metabolite biosynthesis; terpenoid biosynthesis. Its function is as follows. Diterpene cyclase involved in jasmonic acid-dependent defense mechanisms in roots by mediating the biosynthesis of labdane-related diterpenoids (LRDs) natural products such as ent-beyerene, an antimicrobial compound. Catalyzes the cyclization of ent-CDP into ent-beyerene as a major and ent-kaurene as a minor product. May be involved in the catalysis of an early step of the gibberellin (GA) biosynthesis pathway. The protein is Ent-beyerene synthase KSL2, chloroplastic of Oryza sativa subsp. japonica (Rice).